Reading from the N-terminus, the 998-residue chain is Mis18-binding protein 1 (998 aa).

K7 is covalently cross-linked (Glycyl lysine isopeptide (Lys-Gly) (interchain with G-Cter in SUMO2)). S9, S109, and S134 each carry phosphoserine. Residues 122 to 153 (QRDKQEQLTRSSSMLGSPQGEHTKDFPPNTDK) form a disordered region. Residues 142-153 (EHTKDFPPNTDK) show a composition bias toward basic and acidic residues. Residues S169 and S258 each carry the phosphoserine modification. The SANTA domain occupies 336-422 (VHLQEWMIKV…MFGFPHNWKE (87 aa)). Disordered stretches follow at residues 438 to 460 (KTRQETARVQEKQKSKKKDAEDK) and 476 to 502 (DNSLERTEVPTDPLNSLEQPTSGKERR). Residues 488–497 (PLNSLEQPTS) show a composition bias toward polar residues. Phosphothreonine is present on residues T516 and T578. 2 positions are modified to phosphoserine: S638 and S639. The disordered stretch occupies residues 638 to 660 (SSEENEVEIKSRTRARNTKERLN). Positions 644–660 (VEIKSRTRARNTKERLN) are enriched in basic and acidic residues. T688 carries the phosphothreonine modification. Residue K707 forms a Glycyl lysine isopeptide (Lys-Gly) (interchain with G-Cter in SUMO2) linkage. S726 carries the post-translational modification Phosphoserine. In terms of domain architecture, SANT spans 741–796 (TDDEEWSEQELQKLHCAFTSLPKHKPGFWSDVAMAVGSRTADECQKKYTEEPQGQG). Residue K765 forms a Glycyl lysine isopeptide (Lys-Gly) (interchain with G-Cter in SUMO2) linkage. A disordered region spans residues 784-821 (CQKKYTEEPQGQGSRKHGSKKKQANKVQNGEKDSADAK). The segment covering 797–807 (SRKHGSKKKQA) has biased composition (basic residues). Positions 812–821 (NGEKDSADAK) are enriched in basic and acidic residues. Glycyl lysine isopeptide (Lys-Gly) (interchain with G-Cter in SUMO2) cross-links involve residues K821, K828, and K847. S872 carries the post-translational modification Phosphoserine. K948 participates in a covalent cross-link: Glycyl lysine isopeptide (Lys-Gly) (interchain with G-Cter in SUMO2). A phosphoserine mark is found at S955 and S985. Positions 976-998 (SKYFIDDTESDEEEKDYYFSNSD) are disordered. A compositionally biased stretch (acidic residues) spans 981 to 990 (DDTESDEEEK).

As to quaternary structure, interacts with SP1. Interacts with MIS18A. Identified in a complex containing MIS18A, OIP5/MIS18B, MIS18BP1, RBBP7 and RBBP4. Interacts with KAT7/HBO1. Interacts (via N-terminus) with FLNA (via N-terminus).

Its subcellular location is the nucleus. The protein resides in the chromosome. It localises to the centromere. Required for recruitment of CENPA to centromeres and normal chromosome segregation during mitosis. The polypeptide is Mis18-binding protein 1 (Mis18bp1) (Mus musculus (Mouse)).